A 186-amino-acid chain; its full sequence is dCTP deaminase (186 aa).

107-112 is a binding site for dCTP; the sequence is KSTYAR. The active-site Proton donor/acceptor is the E133. DCTP is bound by residues Q152, Y166, and Q176.

This sequence belongs to the dCTP deaminase family. Homotrimer.

The catalysed reaction is dCTP + H2O + H(+) = dUTP + NH4(+). It functions in the pathway pyrimidine metabolism; dUMP biosynthesis; dUMP from dCTP (dUTP route): step 1/2. In terms of biological role, catalyzes the deamination of dCTP to dUTP. This is dCTP deaminase from Campylobacter fetus subsp. fetus (strain 82-40).